Here is a 363-residue protein sequence, read N- to C-terminus: Carbamoyl phosphate synthase small chain (363 aa).

Residues 1 to 171 (MEDGTLFAGA…PYRIPGPGPR (171 aa)) form a CPSase region. 3 residues coordinate L-glutamine: Ser39, Gly219, and Gly221. Residues 171 to 359 (RVVAVDFGAK…LALVDRSAVS (189 aa)) form the Glutamine amidotransferase type-1 domain. Catalysis depends on Cys248, which acts as the Nucleophile. L-glutamine contacts are provided by Leu249, Gln252, Asn290, Gly292, and Tyr293. Catalysis depends on residues His332 and Glu334.

The protein belongs to the CarA family. In terms of assembly, composed of two chains; the small (or glutamine) chain promotes the hydrolysis of glutamine to ammonia, which is used by the large (or ammonia) chain to synthesize carbamoyl phosphate. Tetramer of heterodimers (alpha,beta)4.

The catalysed reaction is hydrogencarbonate + L-glutamine + 2 ATP + H2O = carbamoyl phosphate + L-glutamate + 2 ADP + phosphate + 2 H(+). It catalyses the reaction L-glutamine + H2O = L-glutamate + NH4(+). Its pathway is amino-acid biosynthesis; L-arginine biosynthesis; carbamoyl phosphate from bicarbonate: step 1/1. It functions in the pathway pyrimidine metabolism; UMP biosynthesis via de novo pathway; (S)-dihydroorotate from bicarbonate: step 1/3. Functionally, small subunit of the glutamine-dependent carbamoyl phosphate synthetase (CPSase). CPSase catalyzes the formation of carbamoyl phosphate from the ammonia moiety of glutamine, carbonate, and phosphate donated by ATP, constituting the first step of 2 biosynthetic pathways, one leading to arginine and/or urea and the other to pyrimidine nucleotides. The small subunit (glutamine amidotransferase) binds and cleaves glutamine to supply the large subunit with the substrate ammonia. This is Carbamoyl phosphate synthase small chain from Symbiobacterium thermophilum (strain DSM 24528 / JCM 14929 / IAM 14863 / T).